The chain runs to 229 residues: Cytochrome b translational activator protein CBS1, mitochondrial (229 aa).

A mitochondrion-targeting transit peptide spans 1–25; the sequence is MLRTKVFATTVARISGIRRYIPIRT.

It localises to the mitochondrion inner membrane. MRNA-specific translational activator of cytochrome b. The cytochrome b (COB) leader RNA may represent the target sequence for CBS1 and CBS2, tethering the COB mRNA to the inner mitochondrial membrane, where cotranslational insertion of cytochrome b into the membrane can occur. The sequence is that of Cytochrome b translational activator protein CBS1, mitochondrial (CBS1) from Saccharomyces cerevisiae (strain ATCC 204508 / S288c) (Baker's yeast).